A 198-amino-acid chain; its full sequence is Recombination protein RecR (198 aa).

A C4-type zinc finger spans residues 57–72 (CEKCNTFTEAQICEVC). A Toprim domain is found at 80–175 (TLLCVVETPA…AVTRLARGVP (96 aa)).

Belongs to the RecR family.

Functionally, may play a role in DNA repair. It seems to be involved in an RecBC-independent recombinational process of DNA repair. It may act with RecF and RecO. This is Recombination protein RecR from Burkholderia vietnamiensis (strain G4 / LMG 22486) (Burkholderia cepacia (strain R1808)).